The chain runs to 78 residues: Large ribosomal subunit protein bL28 (78 aa).

It belongs to the bacterial ribosomal protein bL28 family.

In Hydrogenovibrio crunogenus (strain DSM 25203 / XCL-2) (Thiomicrospira crunogena), this protein is Large ribosomal subunit protein bL28.